A 334-amino-acid chain; its full sequence is Beta-hexosaminidase (334 aa).

Substrate-binding positions include Asp57, Arg65, Arg128, and 158-159; that span reads KH. The Proton donor/acceptor role is filled by His171. Residue Asp242 is the Nucleophile of the active site.

Belongs to the glycosyl hydrolase 3 family. NagZ subfamily.

The protein localises to the cytoplasm. It catalyses the reaction Hydrolysis of terminal non-reducing N-acetyl-D-hexosamine residues in N-acetyl-beta-D-hexosaminides.. It functions in the pathway cell wall biogenesis; peptidoglycan recycling. Functionally, plays a role in peptidoglycan recycling by cleaving the terminal beta-1,4-linked N-acetylglucosamine (GlcNAc) from peptide-linked peptidoglycan fragments, giving rise to free GlcNAc, anhydro-N-acetylmuramic acid and anhydro-N-acetylmuramic acid-linked peptides. This chain is Beta-hexosaminidase, found in Methylococcus capsulatus (strain ATCC 33009 / NCIMB 11132 / Bath).